A 277-amino-acid chain; its full sequence is Large ribosomal subunit protein uL2 (277 aa).

A disordered region spans residues 220-277; the sequence is VRGSVMNPNDHPHGGGEGKAPIGRPSPMSPWGKKTLGKKTRSSKARSEKLIIRHRKSR. Basic residues predominate over residues 254-263; that stretch reads TLGKKTRSSK.

This sequence belongs to the universal ribosomal protein uL2 family. In terms of assembly, part of the 50S ribosomal subunit. Forms a bridge to the 30S subunit in the 70S ribosome.

Its function is as follows. One of the primary rRNA binding proteins. Required for association of the 30S and 50S subunits to form the 70S ribosome, for tRNA binding and peptide bond formation. It has been suggested to have peptidyltransferase activity; this is somewhat controversial. Makes several contacts with the 16S rRNA in the 70S ribosome. This chain is Large ribosomal subunit protein uL2, found in Latilactobacillus sakei subsp. sakei (strain 23K) (Lactobacillus sakei subsp. sakei).